We begin with the raw amino-acid sequence, 480 residues long: Voltage-gated potassium channel regulatory subunit KCNG2 (480 aa).

2 disordered regions span residues 1–25 (MARLPGHPEVPGAEPGSAVRGGRGG) and 144–167 (AAEARATPPARGPQTSPGRALGSG). Residues 1-187 (MARLPGHPEV…DVVENPHSGL (187 aa)) are Cytoplasmic-facing. Residues 188–209 (AGKLFAYVSVAFVAVTAVGLCL) form a helical membrane-spanning segment. Topologically, residues 210-230 (STMPDVRAEEERGECSTKCRN) are extracellular. The chain crosses the membrane as a helical span at residues 231–252 (LFVLETVCVAWFSFEFLLRSLQ). Topologically, residues 253 to 263 (AESKCAFLRTP) are cytoplasmic. The helical transmembrane segment at 264-284 (LAIIDILAILPFYVSLLAGLA) threads the bilayer. Over 285–296 (AGPTGSKMLERA) the chain is Extracellular. A helical; Voltage-sensor transmembrane segment spans residues 297–317 (GLVLRLLRALRVLYVMRLARH). At 318–332 (SLGLRSLGLTVRRCA) the chain is on the cytoplasmic side. Residues 333–354 (REFGLLLLFLCVAMALFAPLVH) traverse the membrane as a helical segment. The Extracellular segment spans residues 355-369 (LAERELGAHRDFSSV). An intramembrane region (helical) is located at residues 370-381 (PASYWWAVISMT). Residues 382–387 (TVGYGD) carry the Selectivity filter motif. Residues 382–389 (TVGYGDMV) lie within the membrane without spanning it. The Extracellular segment spans residues 390–396 (PRSLPGQ). Residues 397-425 (VVALSSILSGILLMAFPVTSIFHTFSRSY) traverse the membrane as a helical segment. Residues 426-480 (SELKEQQQRAASPEPVLREDSTRDDSTRSASATEDSSQDPETAGAAGSLPGPVGP) are Cytoplasmic-facing. Positions 429–480 (KEQQQRAASPEPVLREDSTRDDSTRSASATEDSSQDPETAGAAGSLPGPVGP) are disordered. Basic and acidic residues predominate over residues 441 to 452 (VLREDSTRDDST).

It belongs to the potassium channel family. G (TC 1.A.1.2) subfamily. Kv6.2/KCNG2 sub-subfamily. In terms of assembly, heterodimer with KCNB1. As to expression, highly expressed in heart, in particular in right and left atrium, and detected at lower levels in the right and left ventricle.

Its subcellular location is the cell membrane. Its function is as follows. Regulatory alpha-subunit of the voltage-gated potassium (Kv) channel which, when coassembled with KCNB1, can modulate the kinetics and conductance-voltage relationship. Modulates channel activity by shifting the threshold and the half-maximal activation to more negative values. Potassium channel subunit that does not form functional channels by itself. The chain is Voltage-gated potassium channel regulatory subunit KCNG2 from Rattus norvegicus (Rat).